Here is a 256-residue protein sequence, read N- to C-terminus: uncharacterized protein (256 aa).

Helical transmembrane passes span 42–62 (LIALTVLSNLIIISFVLIWFF), 73–93 (FFTLFIPFFISLLVAIFLIFL), and 108–128 (WLFLWTCVFSSLPIFNLWLIV).

It localises to the cell membrane. This is an uncharacterized protein from Mycoplasma genitalium (strain ATCC 33530 / DSM 19775 / NCTC 10195 / G37) (Mycoplasmoides genitalium).